The chain runs to 183 residues: Adenine phosphoribosyltransferase (183 aa).

The protein belongs to the purine/pyrimidine phosphoribosyltransferase family. Homodimer.

The protein localises to the cytoplasm. The catalysed reaction is AMP + diphosphate = 5-phospho-alpha-D-ribose 1-diphosphate + adenine. It functions in the pathway purine metabolism; AMP biosynthesis via salvage pathway; AMP from adenine: step 1/1. Functionally, catalyzes a salvage reaction resulting in the formation of AMP, that is energically less costly than de novo synthesis. The sequence is that of Adenine phosphoribosyltransferase from Proteus mirabilis (strain HI4320).